The chain runs to 419 residues: Transcriptional regulator Myc-A (419 aa).

The 9aaTAD signature appears at 78–86; it reads EMVTEFLGG. 3 disordered regions span residues 141–166, 206–274, and 319–344; these read ALSS…HGSL, SPCQ…HYSP, and NNRK…NVLE. The span at 226-245 shows a compositional bias: acidic residues; sequence ESEEEPEDEDEDCDEEEEID. Residues 248-261 show a composition bias toward basic and acidic residues; the sequence is TVEKRQSASKRVES. The span at 319–328 shows a compositional bias: polar residues; sequence NNRKCASPRS. The bHLH domain maps to 335–387; the sequence is DKRKTHNVLERQRRNELKLSFFALRDQVPEVASNEKAPKVVILKKATEYAISL. The segment at 387 to 415 is leucine-zipper; the sequence is LQEDERRLIRETEQLKYRKEQLKQRLQQL.

Efficient DNA binding requires dimerization with another bHLH protein. Binds DNA as a heterodimer with MAX.

It localises to the nucleus. Functionally, transcription factor that binds DNA in a non-specific manner, yet also specifically recognizes the core sequence 5'-CAC[GA]TG-3'. Activates the transcription of growth-related genes. The chain is Transcriptional regulator Myc-A (myc-a) from Xenopus laevis (African clawed frog).